The primary structure comprises 589 residues: Peroxisomal biogenesis factor 8 (589 aa).

A Microbody targeting signal motif is present at residues 587 to 589; it reads SKL.

It is found in the peroxisome matrix. Its function is as follows. Required for peroxisome assembly. This chain is Peroxisomal biogenesis factor 8 (PEX8), found in Saccharomyces cerevisiae (strain ATCC 204508 / S288c) (Baker's yeast).